A 312-amino-acid chain; its full sequence is Small ribosomal subunit protein uS2 (312 aa).

The protein belongs to the universal ribosomal protein uS2 family. Component of the small ribosomal subunit. Mature ribosomes consist of a small (40S) and a large (60S) subunit. The 40S subunit contains about 33 different proteins and 1 molecule of RNA (18S). The 60S subunit contains about 49 different proteins and 3 molecules of RNA (25S, 5.8S and 5S). Interacts with ribosomal protein S21.

Its subcellular location is the cytoplasm. In terms of biological role, required for the assembly and/or stability of the 40S ribosomal subunit. Required for the processing of the 20S rRNA-precursor to mature 18S rRNA in a late step of the maturation of 40S ribosomal subunits. The sequence is that of Small ribosomal subunit protein uS2 from Vitis vinifera (Grape).